Reading from the N-terminus, the 156-residue chain is Ribosomal RNA large subunit methyltransferase H (156 aa).

Residues leucine 73, glycine 104, and 123–128 (LSSLTL) contribute to the S-adenosyl-L-methionine site.

This sequence belongs to the RNA methyltransferase RlmH family. As to quaternary structure, homodimer.

Its subcellular location is the cytoplasm. The catalysed reaction is pseudouridine(1915) in 23S rRNA + S-adenosyl-L-methionine = N(3)-methylpseudouridine(1915) in 23S rRNA + S-adenosyl-L-homocysteine + H(+). In terms of biological role, specifically methylates the pseudouridine at position 1915 (m3Psi1915) in 23S rRNA. This Ralstonia nicotianae (strain ATCC BAA-1114 / GMI1000) (Ralstonia solanacearum) protein is Ribosomal RNA large subunit methyltransferase H.